The primary structure comprises 316 residues: Tetrahydromethanopterin S-methyltransferase subunit H (316 aa).

It belongs to the MtrH family. As to quaternary structure, the complex is composed of 8 subunits; MtrA, MtrB, MtrC, MtrD, MtrE, MtrF, MtrG and MtrH.

The enzyme catalyses 5-methyl-5,6,7,8-tetrahydromethanopterin + coenzyme M + 2 Na(+)(in) = 5,6,7,8-tetrahydromethanopterin + methyl-coenzyme M + 2 Na(+)(out). It participates in one-carbon metabolism; methanogenesis from CO(2); methyl-coenzyme M from 5,10-methylene-5,6,7,8-tetrahydromethanopterin: step 2/2. In terms of biological role, part of a complex that catalyzes the formation of methyl-coenzyme M and tetrahydromethanopterin from coenzyme M and methyl-tetrahydromethanopterin. This is an energy-conserving, sodium-ion translocating step. MtrH catalyzes the transfer of the methyl group from methyl-tetrahydromethanopterin to the corrinoid prosthetic group of MtrA. In Methanosarcina acetivorans (strain ATCC 35395 / DSM 2834 / JCM 12185 / C2A), this protein is Tetrahydromethanopterin S-methyltransferase subunit H.